The following is an 897-amino-acid chain: Translation initiation factor IF-2 (897 aa).

Residues 402 to 570 (NRAPIVTIMG…SILVQSEILE (169 aa)) form the tr-type G domain. A G1 region spans residues 411-418 (GHVDHGKT). 411-418 (GHVDHGKT) lines the GTP pocket. The segment at 436–440 (GITQN) is G2. Residues 458-461 (DTPG) form a G3 region. Residues 458–462 (DTPGH) and 512–515 (NKID) contribute to the GTP site. The G4 stretch occupies residues 512–515 (NKID). Residues 548–550 (SAV) are G5.

Belongs to the TRAFAC class translation factor GTPase superfamily. Classic translation factor GTPase family. IF-2 subfamily.

It localises to the cytoplasm. Functionally, one of the essential components for the initiation of protein synthesis. Protects formylmethionyl-tRNA from spontaneous hydrolysis and promotes its binding to the 30S ribosomal subunits. Also involved in the hydrolysis of GTP during the formation of the 70S ribosomal complex. The chain is Translation initiation factor IF-2 from Blochmanniella floridana.